The chain runs to 272 residues: 4-hydroxy-tetrahydrodipicolinate reductase (272 aa).

An NAD(+)-binding site is contributed by 12–17; the sequence is GALGKM. Lys-39 serves as a coordination point for NADP(+). Residues 102-104 and 126-129 contribute to the NAD(+) site; these read GTT and SSNY. Catalysis depends on His-159, which acts as the Proton donor/acceptor. His-160 is a binding site for (S)-2,3,4,5-tetrahydrodipicolinate. Lys-163 acts as the Proton donor in catalysis. Residue 169–170 coordinates (S)-2,3,4,5-tetrahydrodipicolinate; the sequence is GT.

This sequence belongs to the DapB family. Homotetramer.

The protein localises to the cytoplasm. It carries out the reaction (S)-2,3,4,5-tetrahydrodipicolinate + NAD(+) + H2O = (2S,4S)-4-hydroxy-2,3,4,5-tetrahydrodipicolinate + NADH + H(+). The enzyme catalyses (S)-2,3,4,5-tetrahydrodipicolinate + NADP(+) + H2O = (2S,4S)-4-hydroxy-2,3,4,5-tetrahydrodipicolinate + NADPH + H(+). The protein operates within amino-acid biosynthesis; L-lysine biosynthesis via DAP pathway; (S)-tetrahydrodipicolinate from L-aspartate: step 4/4. Its function is as follows. Catalyzes the conversion of 4-hydroxy-tetrahydrodipicolinate (HTPA) to tetrahydrodipicolinate. The chain is 4-hydroxy-tetrahydrodipicolinate reductase from Buchnera aphidicola subsp. Baizongia pistaciae (strain Bp).